Consider the following 555-residue polypeptide: Glutamate--tRNA ligase (555 aa).

The 'HIGH' region motif lies at 103–113 (PNPSGPLHIGH).

Belongs to the class-I aminoacyl-tRNA synthetase family. Glutamate--tRNA ligase type 2 subfamily.

Its subcellular location is the cytoplasm. It catalyses the reaction tRNA(Glu) + L-glutamate + ATP = L-glutamyl-tRNA(Glu) + AMP + diphosphate. Functionally, catalyzes the attachment of glutamate to tRNA(Glu) in a two-step reaction: glutamate is first activated by ATP to form Glu-AMP and then transferred to the acceptor end of tRNA(Glu). The chain is Glutamate--tRNA ligase from Methanobrevibacter smithii (strain ATCC 35061 / DSM 861 / OCM 144 / PS).